The primary structure comprises 691 residues: MDGCKKELPRLQEPEEDEDCYILNVQSSSDDTSGSSVARRAPKRQASCILNVQSRSGDTSGSSVARRAPKRQASSVVVIDSDSDEECHTHEEKKAKLLEINSDDESPECCHVKPAIQEPPIVISDDDNDDDNGNDLEVPDDNSDDSEAPDDNSDDSEAPDDNSDDSEAPDDNSDDSEAPDDNSDDSDVPDDNSDDSSDDNSDDSSDDNSDDSDVPDDKSDDSDVPDDSSDDSDVPDDSSDDSEAPDDSSDDSEAPDDSSDDSEAPDDSSDDSEAPDDSSDDSEASDDSSDDSEASDDSSDDSEAPDDKSDDSDVPEDKSDDSDVPDDNSDDLEVPVPAEDLCNEGQIASDEEELVEAAAAVSQHDSSDDAGEQDLGENLSKPPSDPEANPEVSERKLPTEEEPAPVVEQSGKRKSKTKTIVEPPRKRQTKTKNIVEPPRKRQTKTKNIVEPLRKRKAKTKNVSVTPGHKKRGPSKKKPGAAKVEKRKTRTPKCKVPGCFLQDLEKSKKYSGKNLKRNKDELVQRIYDLFNRSVCDKKLPEKLRIGWNNKMVKTAGLCSTGEMWYPKWRRFAKIQIGLKVCDSADRIRDTLIHEMCHAASWLIDGIHDSHGDAWKYYARKSNRIHPELPRVTRCHNYKINYKVHYECTGCKTRIGCYTKSLDTSRFICAKCKGSLVMVPLTQKDGTRIVPHV.

The SUMO interaction motif 1 (SIM) signature appears at 22-25; that stretch reads ILNV. A disordered region spans residues 25–488; that stretch reads VQSSSDDTSG…GAAKVEKRKT (464 aa). Low complexity predominate over residues 27-36; it reads SSSDDTSGSS. Over residues 48–63 the composition is skewed to polar residues; the sequence is CILNVQSRSGDTSGSS. Short sequence motifs (SUMO interaction motif 1 (SIM)) lie at residues 76–79, 97–100, and 121–124; these read VVVI, LLEI, and IVIS. Basic and acidic residues predominate over residues 86–97; that stretch reads ECHTHEEKKAKL. Acidic residues predominate over residues 124 to 333; the sequence is SDDDNDDDNG…VPDDNSDDLE (210 aa). Over residues 467–488 the composition is skewed to basic residues; the sequence is GHKKRGPSKKKPGAAKVEKRKT. Positions 522 to 677 constitute a SprT-like domain; the sequence is VQRIYDLFNR…AKCKGSLVMV (156 aa).

The protein belongs to the serine-aspartate repeat-containing protein (SDr) family. In terms of assembly, interacts (via SIM domains) with SUMO2; this interaction allows the GCNA recruitment to DPCs sites. Interacts with TOP2A; this interaction allows the resolution of topoisomerase II (TOP2A) DNA-protein cross-links. In terms of tissue distribution, expressed in germ cells of the testis (at protein level). Detected in skeletal muscle, liver, kidney, pancreas, heart, lung and brain. Expressed throughout spermatogenesis, from spermatogonia to elongated spermatids, in normal adult testis (at protein level).

It localises to the nucleus. Its subcellular location is the PML body. It is found in the chromosome. In terms of biological role, may play a role in DNA-protein cross-links (DPCs) clearance through a SUMO-dependent recruitment to sites of DPCs, ensuring the genomic stability by protecting germ cells and early embryos from various sources of damage. Can resolve the topoisomerase II (TOP2A) DPCs. The chain is Germ cell nuclear acidic protein from Homo sapiens (Human).